Here is a 161-residue protein sequence, read N- to C-terminus: Ribosome maturation factor RimP (161 aa).

This sequence belongs to the RimP family.

Its subcellular location is the cytoplasm. Its function is as follows. Required for maturation of 30S ribosomal subunits. In Rickettsia conorii (strain ATCC VR-613 / Malish 7), this protein is Ribosome maturation factor RimP.